A 650-amino-acid chain; its full sequence is Chaperone protein HtpG (650 aa).

Positions 1-344 (MSKHTHSFQA…SADLPLNVSR (344 aa)) are a; substrate-binding. Positions 345–582 (ELLQESRDVR…DGGMSTQLAR (238 aa)) are b. The tract at residues 583–650 (LLKQAGQSAP…YVKRVNALLA (68 aa)) is c.

This sequence belongs to the heat shock protein 90 family. In terms of assembly, homodimer.

The protein localises to the cytoplasm. Functionally, molecular chaperone. Has ATPase activity. In Acidovorax sp. (strain JS42), this protein is Chaperone protein HtpG.